The chain runs to 2352 residues: Ectopic P granules protein 5 (2352 aa).

Disordered stretches follow at residues 1–112 (MAEL…IFPR) and 1315–1335 (KNRESPLPPEIGSPRSRSSAK). The span at 66-81 (DSLKREEASEPLKDVR) shows a compositional bias: basic and acidic residues.

This sequence belongs to the EPG5 family. Expressed in pharyngeal and body wall muscles and intestine cells.

The protein localises to the cytoplasm. It localises to the cytoplasmic vesicle. Its subcellular location is the phagosome membrane. Its function is as follows. Involved in the maturation of autophagosomes into autolysosomes during starvation-induced autotrophy. Specifically, involved in the clearance of apoptotic cells by promoting the delivery of engulfed apoptotic cells to the lysosome. The polypeptide is Ectopic P granules protein 5 (Caenorhabditis elegans).